Reading from the N-terminus, the 279-residue chain is NAD kinase (279 aa).

Asp-57 acts as the Proton acceptor in catalysis. Residues 57-58 (DG), 133-134 (NE), Arg-159, Asp-161, and 172-177 (TAYNKS) contribute to the NAD(+) site.

Belongs to the NAD kinase family. Requires a divalent metal cation as cofactor.

The protein resides in the cytoplasm. The catalysed reaction is NAD(+) + ATP = ADP + NADP(+) + H(+). Functionally, involved in the regulation of the intracellular balance of NAD and NADP, and is a key enzyme in the biosynthesis of NADP. Catalyzes specifically the phosphorylation on 2'-hydroxyl of the adenosine moiety of NAD to yield NADP. The chain is NAD kinase from Streptococcus pyogenes serotype M2 (strain MGAS10270).